A 323-amino-acid chain; its full sequence is Olfactory receptor 6T1 (323 aa).

Topologically, residues Met-1–Phe-25 are extracellular. N-linked (GlcNAc...) asparagine glycosylation is present at Asn-5. A helical transmembrane segment spans residues Leu-26–Ile-46. Over Val-47 to Arg-54 the chain is Cytoplasmic. The helical transmembrane segment at Leu-55–Thr-75 threads the bilayer. At Val-76–Ile-99 the chain is on the extracellular side. An intrachain disulfide couples Cys-97 to Cys-189. Residues Gln-100–Leu-120 traverse the membrane as a helical segment. At Asp-121–His-139 the chain is on the cytoplasmic side. Residues Val-140 to Thr-160 form a helical membrane-spanning segment. The Extracellular portion of the chain corresponds to Val-161–Leu-197. Residues Val-198–Ser-217 traverse the membrane as a helical segment. Topologically, residues Tyr-218 to Ala-237 are cytoplasmic. Residues Phe-238–Leu-258 form a helical membrane-spanning segment. Over Tyr-259–Asn-271 the chain is Extracellular. Residues Lys-272–Leu-292 form a helical membrane-spanning segment. Residues Arg-293–Lys-323 lie on the Cytoplasmic side of the membrane.

This sequence belongs to the G-protein coupled receptor 1 family.

It localises to the cell membrane. Odorant receptor. This chain is Olfactory receptor 6T1 (OR6T1), found in Homo sapiens (Human).